We begin with the raw amino-acid sequence, 387 residues long: Protein RecA (387 aa).

78-85 (GPESSGKT) serves as a coordination point for ATP. The span at 355 to 369 (KSIERDTKETKETKS) shows a compositional bias: basic and acidic residues. The tract at residues 355-387 (KSIERDTKETKETKSKQPVSFSTEADGDIAVGE) is disordered.

This sequence belongs to the RecA family.

Its subcellular location is the cytoplasm. Can catalyze the hydrolysis of ATP in the presence of single-stranded DNA, the ATP-dependent uptake of single-stranded DNA by duplex DNA, and the ATP-dependent hybridization of homologous single-stranded DNAs. It interacts with LexA causing its activation and leading to its autocatalytic cleavage. This Leptospira biflexa serovar Patoc (strain Patoc 1 / ATCC 23582 / Paris) protein is Protein RecA.